The sequence spans 1049 residues: Multiple C2 domain and transmembrane region protein 16 (1049 aa).

The C2 1 domain occupies 1 to 112; that stretch reads MATTRKLVVE…VGQGEEALIY (112 aa). Residues 136-249 are disordered; it reads DEKPPPLKPT…PPQNQPDGED (114 aa). 2 stretches are compositionally biased toward basic and acidic residues: residues 153 to 170 and 226 to 238; these read VEEK…ESKP and ESDK…KPVE. 3 C2 domains span residues 302-426, 460-582, and 617-745; these read TSEI…PQWY, TAGN…SRWL, and VCSD…RNTY. 4 residues coordinate Ca(2+): Ser-338, Asp-390, Thr-393, and Ser-398. 2 helical membrane passes run 883–903 and 989–1009; these read VMLI…LFVI and ATGI…LVPT.

Belongs to the MCTP family. The cofactor is Ca(2+). In terms of tissue distribution, expressed in the vascular tissues of roots, cotyledons and rosette leaves. Accumulates in roots meristems and shoot apical meristems (SAMs). Observed in flowers.

The protein resides in the endoplasmic reticulum membrane. Its function is as follows. May function as a signaling molecule by regulating the trafficking of other regulators. In Arabidopsis thaliana (Mouse-ear cress), this protein is Multiple C2 domain and transmembrane region protein 16.